The following is a 121-amino-acid chain: Basic phospholipase A2 BmjeTX-I (121 aa).

7 disulfides stabilise this stretch: Cys-26–Cys-114, Cys-28–Cys-45, Cys-44–Cys-95, Cys-50–Cys-121, Cys-51–Cys-88, Cys-58–Cys-82, and Cys-76–Cys-86. Residues Tyr-27, Gly-29, and Gly-31 each contribute to the Ca(2+) site. His-48 is an active-site residue. A Ca(2+)-binding site is contributed by Asp-49. Asp-89 is a catalytic residue.

Ca(2+) serves as cofactor. Expressed by the venom gland.

It is found in the secreted. The catalysed reaction is a 1,2-diacyl-sn-glycero-3-phosphocholine + H2O = a 1-acyl-sn-glycero-3-phosphocholine + a fatty acid + H(+). Functionally, snake venom phospholipase A2 (PLA2) that induces a slight blockade of neuromuscular contraction in an indirectly stimulated chick biventer cervicis nerve-muscle preparation. Does not inhibit contraction of chick biventer cervicic nerve-muscle preparation in response to treatment with acetylcholine or KCl. The neuromuscular blockade is mediated by inhibitory action at the presynaptic motor nerve endings. Lyses skeletal myoblasts and myotubes in vitro, and intramuscular injection causes local muscle necrosis. Induces edema in the mouse foot pad. Induces a transient increase of IL-6 levels. PLA2 catalyzes the calcium-dependent hydrolysis of the 2-acyl groups in 3-sn-phosphoglycerides. The chain is Basic phospholipase A2 BmjeTX-I from Bothrops marajoensis (Marajo lancehead).